A 332-amino-acid chain; its full sequence is Biotin synthase (332 aa).

Residues 53 to 283 enclose the Radical SAM core domain; it reads WGKGGVHACS…VHPRKTIKFA (231 aa). Residues C71, C75, and C78 each coordinate [4Fe-4S] cluster. The [2Fe-2S] cluster site is built by C150, C211, and K281.

Belongs to the radical SAM superfamily. Biotin synthase family. Homodimer. [4Fe-4S] cluster is required as a cofactor. Requires [2Fe-2S] cluster as cofactor.

It carries out the reaction (4R,5S)-dethiobiotin + (sulfur carrier)-SH + 2 reduced [2Fe-2S]-[ferredoxin] + 2 S-adenosyl-L-methionine = (sulfur carrier)-H + biotin + 2 5'-deoxyadenosine + 2 L-methionine + 2 oxidized [2Fe-2S]-[ferredoxin]. Its pathway is cofactor biosynthesis; biotin biosynthesis; biotin from 7,8-diaminononanoate: step 2/2. Catalyzes the conversion of dethiobiotin (DTB) to biotin by the insertion of a sulfur atom into dethiobiotin via a radical-based mechanism. In Chlorobium luteolum (strain DSM 273 / BCRC 81028 / 2530) (Pelodictyon luteolum), this protein is Biotin synthase.